A 354-amino-acid chain; its full sequence is Rhodopsin (354 aa).

Over 1–36 (MNGTEGPNFYIPMSNKTGVVRSPFEYPQYYLAEPWK) the chain is Extracellular. N2 and N15 each carry an N-linked (GlcNAc...) asparagine glycan. The helical transmembrane segment at 37–61 (YSILAAYMFLLILLGFPINFMTLYV) threads the bilayer. Over 62–73 (TIQHKKLRTPLN) the chain is Cytoplasmic. The chain crosses the membrane as a helical span at residues 74–96 (YILLNLAFANHFMVLCGFTITLY). Topologically, residues 97–110 (TSLHGYFVFGQSGC) are extracellular. A disulfide bridge links C110 with C187. The chain crosses the membrane as a helical span at residues 111–133 (YFEGFFATLGGEIALWSLVALAI). Positions 134-136 (ERY) match the 'Ionic lock' involved in activated form stabilization motif. Over 134–152 (ERYIVVCKPMSNFRFGENH) the chain is Cytoplasmic. Residues 153-173 (AMMGVAFTWIMALACAVPPLF) form a helical membrane-spanning segment. Over 174–202 (GWSRYIPEGMQCSCGVDYYTLKPEINNES) the chain is Extracellular. Residues 203-224 (FVIYMFVVHFLIPLIIITFCYG) form a helical membrane-spanning segment. The Cytoplasmic segment spans residues 225 to 252 (RLVCTVKEAAAQQQESATTQKAEKEVTR). The helical transmembrane segment at 253 to 274 (MVIIMVIFFLICWVPYAYVAFY) threads the bilayer. The Extracellular segment spans residues 275-286 (IFCNQGSEFGPI). Residues 287-308 (FMTVPAFFAKSSAIYNPVIYIM) form a helical membrane-spanning segment. An N6-(retinylidene)lysine modification is found at K296. At 309–354 (LNKQFRNCMITTLCCGKNPFGDDDASSAATSKTEATSVSTSQVSPA) the chain is on the cytoplasmic side. S-palmitoyl cysteine attachment occurs at residues C322 and C323. The disordered stretch occupies residues 332-354 (DASSAATSKTEATSVSTSQVSPA). Positions 334 to 354 (SSAATSKTEATSVSTSQVSPA) are enriched in low complexity.

Belongs to the G-protein coupled receptor 1 family. Opsin subfamily. In terms of processing, contains one covalently linked retinal chromophore. Upon light absorption, the covalently bound 11-cis-retinal is converted to all-trans-retinal. After hydrolysis of the Schiff base and release of the covalently bound all-trans-retinal, active rhodopsin is regenerated by binding of a fresh molecule of 11-cis-retinal.

Its subcellular location is the membrane. The protein resides in the cell projection. The protein localises to the cilium. It localises to the photoreceptor outer segment. Photoreceptor required for image-forming vision at low light intensity. Required for photoreceptor cell viability after birth. Light-induced isomerization of 11-cis to all-trans retinal triggers a conformational change that activates signaling via G-proteins. Subsequent receptor phosphorylation mediates displacement of the bound G-protein alpha subunit by arrestin and terminates signaling. The chain is Rhodopsin (RHO) from Rana temporaria (European common frog).